We begin with the raw amino-acid sequence, 194 residues long: Dephospho-CoA kinase (194 aa).

In terms of domain architecture, DPCK spans 3-194; that stretch reads TIGLTGGIGS…EQVDGFWGGL (192 aa). 11–16 serves as a coordination point for ATP; sequence GSGKST.

The protein belongs to the CoaE family.

The protein resides in the cytoplasm. The enzyme catalyses 3'-dephospho-CoA + ATP = ADP + CoA + H(+). The protein operates within cofactor biosynthesis; coenzyme A biosynthesis; CoA from (R)-pantothenate: step 5/5. Functionally, catalyzes the phosphorylation of the 3'-hydroxyl group of dephosphocoenzyme A to form coenzyme A. This Corynebacterium jeikeium (strain K411) protein is Dephospho-CoA kinase.